The following is a 145-amino-acid chain: MYLNSLSNSVYKKRSKKRICRGIGSGWGKTGGRGHKGQKSRSGGKIRKSFEGGQTPLYRRIPKFGFRSKKKKFFDEIRLFELDCFHNLKYINLSILKKINLINKNIKYVKIIKSGLINRPIIISGLSVTKGARLCIESAGGVVKS.

The disordered stretch occupies residues 23-51; it reads IGSGWGKTGGRGHKGQKSRSGGKIRKSFE. The span at 32–47 shows a compositional bias: basic residues; that stretch reads GRGHKGQKSRSGGKIR.

Belongs to the universal ribosomal protein uL15 family. In terms of assembly, part of the 50S ribosomal subunit.

Its function is as follows. Binds to the 23S rRNA. The chain is Large ribosomal subunit protein uL15 from Buchnera aphidicola subsp. Cinara cedri (strain Cc).